The sequence spans 262 residues: Tetratricopeptide repeat protein 33 (262 aa).

The tract at residues 17-63 is disordered; the sequence is ATSQQFEAEAADEKDAAENEDGNWLQASKRRKETLQEGCKQRSQQLK. 3 TPR repeats span residues 59-92, 93-126, and 127-160; these read SQQL…TPGD, ATLY…NPHS, and WEAW…YPMN. Position 197 is a phosphoserine (serine 197).

The polypeptide is Tetratricopeptide repeat protein 33 (Ttc33) (Mus musculus (Mouse)).